Reading from the N-terminus, the 832-residue chain is Elongation factor 2 (832 aa).

The tr-type G domain maps to 17–336; the sequence is HNIRNMSVIA…MIVTHLPSPA (320 aa). Position 26–33 (26–33) interacts with GTP; that stretch reads AHVDHGKS. 2 positions are modified to phosphothreonine: Thr-57 and Thr-59. GTP-binding positions include 152 to 155 and 207 to 209; these read NKVD and SGL. A disordered region spans residues 580–608; it reads AEPLPDGLTDDIEEGKVSPRDDPKERSNL. Positions 593–608 are enriched in basic and acidic residues; the sequence is EGKVSPRDDPKERSNL. A Diphthamide modification is found at His-689.

The protein belongs to the TRAFAC class translation factor GTPase superfamily. Classic translation factor GTPase family. EF-G/EF-2 subfamily.

The protein resides in the cytoplasm. It carries out the reaction GTP + H2O = GDP + phosphate + H(+). Catalyzes the GTP-dependent ribosomal translocation step during translation elongation. During this step, the ribosome changes from the pre-translocational (PRE) to the post-translocational (POST) state as the newly formed A-site-bound peptidyl-tRNA and P-site-bound deacylated tRNA move to the P and E sites, respectively. Catalyzes the coordinated movement of the two tRNA molecules, the mRNA and conformational changes in the ribosome. The chain is Elongation factor 2 from Cryptosporidium parvum.